A 1993-amino-acid polypeptide reads, in one-letter code: Otoferlin (1993 aa).

The 98-residue stretch at 1-98 (MALIVHLKTV…VEENRVEVSD (98 aa)) folds into the C2 1 domain. Over 1-1959 (MALIVHLKTV…IKYLICTRYK (1959 aa)) the chain is Cytoplasmic. A disordered region spans residues 127–212 (PWDDGDFLGD…KEEPQRQDEP (86 aa)). A compositionally biased stretch (acidic residues) spans 129–145 (DDGDFLGDESLQEEEKD). Basic and acidic residues-rich tracts occupy residues 163–186 (PGEKSFRSKGKEKTKGGRDGEHKA) and 202–211 (HKEEPQRQDE). C2 domains are found at residues 251-372 (KRSK…HKWA) and 415-546 (IEGN…FLPT). Residues 654 to 708 (NYGNEVDGTSRPQRPRPRKEPGDEEEVDLIQNSSDDEGDEAGDLASVSSTPPMRP) form a disordered region. Residues 675-695 (GDEEEVDLIQNSSDDEGDEAG) show a composition bias toward acidic residues. Residues 807-836 (RERLKSCMRELESMGQQAKSLRAQVKRHTV) adopt a coiled-coil conformation. 2 C2 domains span residues 959–1084 (LHSF…PPRF) and 1131–1257 (RGPI…ANWN). Residues aspartate 991, aspartate 997, aspartate 1053, aspartate 1055, and aspartate 1061 each coordinate Ca(2+). Disordered stretches follow at residues 1294-1318 (AEDEKERKKKKKKGPSEEAEEEEPD) and 1339-1398 (LRQH…EKKK). Acidic residues predominate over residues 1348–1357 (DLEEKEEMDS). Over residues 1366 to 1379 (KNKEKSRAAKEEKK) the composition is skewed to basic and acidic residues. C2 domains lie at 1460–1589 (LPED…ATCG) and 1710–1861 (DMPA…KQCT). 8 residues coordinate Ca(2+): aspartate 1504, aspartate 1510, aspartate 1559, aspartate 1561, aspartate 1567, aspartate 1832, serine 1835, and aspartate 1838. Residues 1960–1980 (WLIIKIVLALLGLLMLALFLY) form a helical membrane-spanning segment. Residues 1981–1993 (SLPGYMVKKLLGA) are Extracellular-facing.

The protein belongs to the ferlin family. As to quaternary structure, interacts with SNAP25; the interaction is direct. Interacts with STX1; the interaction is direct. Interacts with RAB8B. Requires Ca(2+) as cofactor. As to expression, isoform 1 is expressed in the cochlea and brain. Expressed in cerebellum (Purkinje cells), hippocampus (granule cells of the dentate gyrus and in pyramidal cells of the CA1-CA3 region) and cortex (stellate and pyramidal cells). Expressed in hair cells of vestibular organs such as the saccule, utricle and crista ampullari. Expressed in the cochlear inner and outer cells (IHCs and OHCs) (at protein level). Expressed in brain: brainstem, cerebellum (granules cells and Purkinje cell layer), cortex (layers IV and V), inferior colliculus, superior colliculus and hippocampus (granule cells of the dentate gyrus and in pyramidal cells of the CA1-CA3 region).

Its subcellular location is the cytoplasmic vesicle. The protein resides in the secretory vesicle. The protein localises to the synaptic vesicle membrane. It localises to the basolateral cell membrane. It is found in the endoplasmic reticulum membrane. Its subcellular location is the golgi apparatus membrane. The protein resides in the presynaptic cell membrane. The protein localises to the cell membrane. Functionally, key calcium ion sensor involved in the Ca(2+)-triggered synaptic vesicle-plasma membrane fusion and in the control of neurotransmitter release at these output synapses. Interacts in a calcium-dependent manner to the presynaptic SNARE proteins at ribbon synapses of cochlear inner hair cells (IHCs) to trigger exocytosis of neurotransmitter. Also essential to synaptic exocytosis in immature outer hair cells (OHCs). May also play a role within the recycling of endosomes. This is Otoferlin (Otof) from Rattus norvegicus (Rat).